Consider the following 247-residue polypeptide: MRKKLIAGNWKMNGSLAANEALVKGLRVGVGASVCQVALCVPSVYLAQCQALLVGTAIALGAQDLSQHEVGAFTGEISGAMLQEFGVRYCIVGHSERRQYHFETDALVAAKAQRALACGITPIVCVGETLAEREAGRTEEVVKRQLAAVIHANGHCISEVVVAYEPVWAIGTGKTASIEQAQQVHSVLRQQLQAASIQADRIQIIYGGSMNAANAAELLAQPDIDGGLVGGASLKVPDFLSIIASAC.

Residue 9–11 (NWK) participates in substrate binding. The Electrophile role is filled by H94. The active-site Proton acceptor is E165. Residues G171, S209, and 230–231 (GG) contribute to the substrate site.

The protein belongs to the triosephosphate isomerase family. Homodimer.

It is found in the cytoplasm. The catalysed reaction is D-glyceraldehyde 3-phosphate = dihydroxyacetone phosphate. The protein operates within carbohydrate biosynthesis; gluconeogenesis. It participates in carbohydrate degradation; glycolysis; D-glyceraldehyde 3-phosphate from glycerone phosphate: step 1/1. In terms of biological role, involved in the gluconeogenesis. Catalyzes stereospecifically the conversion of dihydroxyacetone phosphate (DHAP) to D-glyceraldehyde-3-phosphate (G3P). This chain is Triosephosphate isomerase, found in Albidiferax ferrireducens (strain ATCC BAA-621 / DSM 15236 / T118) (Rhodoferax ferrireducens).